An 879-amino-acid chain; its full sequence is Alanine--tRNA ligase (879 aa).

Residues H566, H570, C668, and H672 each coordinate Zn(2+).

It belongs to the class-II aminoacyl-tRNA synthetase family. Zn(2+) serves as cofactor.

The protein resides in the cytoplasm. The catalysed reaction is tRNA(Ala) + L-alanine + ATP = L-alanyl-tRNA(Ala) + AMP + diphosphate. In terms of biological role, catalyzes the attachment of alanine to tRNA(Ala) in a two-step reaction: alanine is first activated by ATP to form Ala-AMP and then transferred to the acceptor end of tRNA(Ala). Also edits incorrectly charged Ser-tRNA(Ala) and Gly-tRNA(Ala) via its editing domain. The polypeptide is Alanine--tRNA ligase (Clostridium botulinum (strain Alaska E43 / Type E3)).